A 363-amino-acid polypeptide reads, in one-letter code: Cyclin-D1-1 (363 aa).

The tract at residues 39–77 is disordered; the sequence is ELEREGEPAQGSSPSSSLSCAAAAAAAADDDDEDEDEHG. Positions 50–65 are enriched in low complexity; that stretch reads SSPSSSLSCAAAAAAA. A compositionally biased stretch (acidic residues) spans 66–75; sequence ADDDDEDEDE.

This sequence belongs to the cyclin family. Cyclin D subfamily.

The protein is Cyclin-D1-1 (CYCD1-1) of Oryza sativa subsp. japonica (Rice).